Here is a 322-residue protein sequence, read N- to C-terminus: MDGYAVRAEAMEKRYGEKRALDGFDLAVGEGTVHGLLGPNGAGKTTAVRILSTLVRLDGGRATVAGLDVARQPREVRARIGLTGQYAAVDEVLTGRQNLEMFGRLFHLGGRRARLRATELLEQFDLTDAGDRGVGKYSGGMRRRLDLAASMILAPAVLFLDEPTTGLDPRSRGEVWESVRALVAGGTTVLLTTQYLEEADKLASRITVIDQGRAIADDTPDGLKNLVGGDRIEVVVAERAEIPRVVKVVARVADGEPEADETESRVHAPVTDRVTALTEVARTLQDEGVRVEDIGLRRPSLDDVFLRLTGHRTENTEAKEAA.

Residues 6–236 (VRAEAMEKRY…VGGDRIEVVV (231 aa)) enclose the ABC transporter domain. 38–45 (GPNGAGKT) provides a ligand contact to ATP.

Belongs to the ABC transporter superfamily. Drug exporter-1 (DrugE1) (TC 3.A.1.105) family. As to quaternary structure, the complex is probably composed of two ATP-binding proteins (DrrA2) and two transmembrane proteins (DrrB2).

It is found in the cell membrane. It carries out the reaction daunorubicin(in) + ATP + H2O = daunorubicin(out) + ADP + phosphate + H(+). In terms of biological role, part of the ABC transporter complex DrrA2B2 involved in daunorubicin efflux. Responsible for energy coupling to the transport system. Confers self-resistance to daunorubicin, an antibiotic produced by S.coeruleorubidus. The polypeptide is Daunorubicin resistance ATP-binding protein DrrA2 (Streptomyces coeruleorubidus).